The chain runs to 89 residues: Elongation factor 1-beta (89 aa).

Belongs to the EF-1-beta/EF-1-delta family.

Promotes the exchange of GDP for GTP in EF-1-alpha/GDP, thus allowing the regeneration of EF-1-alpha/GTP that could then be used to form the ternary complex EF-1-alpha/GTP/AAtRNA. The chain is Elongation factor 1-beta from Methanococcoides burtonii (strain DSM 6242 / NBRC 107633 / OCM 468 / ACE-M).